The primary structure comprises 27 residues: Conotoxin as14a (27 aa).

Disulfide bonds link C6–C26 and C10–C22.

It belongs to the conotoxin L superfamily. Expressed by the venom duct.

The protein resides in the secreted. In terms of biological role, in vivo, intracranial injection, elicits scratching and grooming activity in mice. This Conus cancellatus (Cancellate cone) protein is Conotoxin as14a.